A 150-amino-acid chain; its full sequence is Ribosome maturation factor RimP (150 aa).

This sequence belongs to the RimP family.

It is found in the cytoplasm. In terms of biological role, required for maturation of 30S ribosomal subunits. This is Ribosome maturation factor RimP from Acidithiobacillus ferrooxidans (strain ATCC 23270 / DSM 14882 / CIP 104768 / NCIMB 8455) (Ferrobacillus ferrooxidans (strain ATCC 23270)).